The sequence spans 70 residues: DNA-directed RNA polymerase subunit omega (70 aa).

It belongs to the RNA polymerase subunit omega family. In terms of assembly, the RNAP catalytic core consists of 2 alpha, 1 beta, 1 beta' and 1 omega subunit. When a sigma factor is associated with the core the holoenzyme is formed, which can initiate transcription.

The enzyme catalyses RNA(n) + a ribonucleoside 5'-triphosphate = RNA(n+1) + diphosphate. Functionally, promotes RNA polymerase assembly. Latches the N- and C-terminal regions of the beta' subunit thereby facilitating its interaction with the beta and alpha subunits. The polypeptide is DNA-directed RNA polymerase subunit omega (Bacillus mycoides (strain KBAB4) (Bacillus weihenstephanensis)).